The chain runs to 375 residues: Carbamoyl phosphate synthase small chain (375 aa).

Positions 1-180 (MSKALLVLED…DAYVVEPKGK (180 aa)) are CPSase. The L-glutamine site is built by Ser46, Gly232, and Gly234. One can recognise a Glutamine amidotransferase type-1 domain in the interval 184-375 (TVAALDLGIK…SFVELMAAQR (192 aa)). Cys260 (nucleophile) is an active-site residue. Positions 261, 264, 302, 304, and 305 each coordinate L-glutamine. Residues His350 and Glu352 contribute to the active site.

It belongs to the CarA family. As to quaternary structure, composed of two chains; the small (or glutamine) chain promotes the hydrolysis of glutamine to ammonia, which is used by the large (or ammonia) chain to synthesize carbamoyl phosphate. Tetramer of heterodimers (alpha,beta)4.

The catalysed reaction is hydrogencarbonate + L-glutamine + 2 ATP + H2O = carbamoyl phosphate + L-glutamate + 2 ADP + phosphate + 2 H(+). It carries out the reaction L-glutamine + H2O = L-glutamate + NH4(+). It functions in the pathway amino-acid biosynthesis; L-arginine biosynthesis; carbamoyl phosphate from bicarbonate: step 1/1. The protein operates within pyrimidine metabolism; UMP biosynthesis via de novo pathway; (S)-dihydroorotate from bicarbonate: step 1/3. Functionally, small subunit of the glutamine-dependent carbamoyl phosphate synthetase (CPSase). CPSase catalyzes the formation of carbamoyl phosphate from the ammonia moiety of glutamine, carbonate, and phosphate donated by ATP, constituting the first step of 2 biosynthetic pathways, one leading to arginine and/or urea and the other to pyrimidine nucleotides. The small subunit (glutamine amidotransferase) binds and cleaves glutamine to supply the large subunit with the substrate ammonia. The sequence is that of Carbamoyl phosphate synthase small chain from Mycobacterium leprae (strain TN).